A 64-amino-acid polypeptide reads, in one-letter code: Kappa-lycotoxin-Os1a (64 aa).

Cystine bridges form between Cys10-Cys26, Cys17-Cys56, Cys19-Cys42, and Cys28-Cys40.

The protein belongs to the neurotoxin 04 (omega-agtx) family. 01 (type I omega-agtx) subfamily. In terms of tissue distribution, expressed by the venom gland.

The protein localises to the secreted. Functionally, insecticidal to house crickets. It induces an excitatory slow-onset impact that leads to irreversible spastic paralysis. It also modifies human voltage-gated potassium channel Kv1.5/KCNA5. Most likely, it binds to the voltage-sensing domain of the channel, suggesting it does not block the pore but prevents its opening at physiological membrane potentials. The recombinant peptide binds to the channel in an irreversible manner and slows down the hKv1.5 current activation kinetics. It is not toxic to mice, when intracranially injected (at 0.5 ug/g mouse). This Oculicosa supermirabilis (Central Asian wolf-spider) protein is Kappa-lycotoxin-Os1a.